Here is a 702-residue protein sequence, read N- to C-terminus: Transposon Tn7 transposition protein TnsB (702 aa).

The interval 1–139 (MWQINEVVLF…GQTPNALIPD (139 aa)) is DNA-binding domain 1 (DBD1). The H-T-H motif DNA-binding region spans 105 to 124 (VEHVVQEHKVTKATVYKLLR). The interval 137–160 (IPDYKNSGAPGERRSATGTAKIGR) is disordered. The segment at 140 to 172 (YKNSGAPGERRSATGTAKIGRAREYGKGEGTKV) is linker 1. The segment at 173-233 (TPEIERLFRL…QFRYFYDREY (61 aa)) is DNA-binding domain 2 (DBD2). The segment at 234-267 (PKAQRLKSRVKAGVYKKDVRPLSSTATSQALGPG) is linker 2. The 219-residue stretch at 262 to 480 (QALGPGSRYE…IPVQLWQWGM (219 aa)) folds into the Integrase catalytic domain. The catalytic domain (CD) stretch occupies residues 268–582 (SRYEIDATIA…RSRQFKGLSF (315 aa)). Residues 589-702 (QAQEKHNKAN…FQDPPEKDES (114 aa)) form a C-terminal domain region. The disordered stretch occupies residues 623–702 (KLTPSTTEPK…FQDPPEKDES (80 aa)).

As to quaternary structure, heteromer with TnsA.

In terms of biological role, sequence-specific, DNA-binding protein required for Tn7 transposition. Recognizes sequences necessary for recombination at both left and right ends of Tn7 and, together with TnsA, forms the transposase. TnsB executes the 3'-DNA strand breakage and joining reactions. TnsB binding introduces DNA bending. There are 3 DNA-binding sites in the left and 4 in the right end of Tn7; as TnsB levels increase more TnsB is bound, suggesting high protein levels contribute to transposon immunity. Binding of TnsB to the transposon right end represses expression of the downstream transposition genes. TnsABC + TnsD promote high-frequency insertion of Tn7 into a specific target site known as att-Tn7 whereas TnsABC + TnsE promote low-frequency insertion into many different sites. In Escherichia coli, this protein is Transposon Tn7 transposition protein TnsB.